Reading from the N-terminus, the 413-residue chain is Tyrosine--tRNA ligase (413 aa).

A 'HIGH' region motif is present at residues proline 59–histidine 68. The 'KMSKS' region signature appears at lysine 243–serine 247. An ATP-binding site is contributed by lysine 246. The S4 RNA-binding domain maps to leucine 351–leucine 411.

The protein belongs to the class-I aminoacyl-tRNA synthetase family. TyrS type 2 subfamily. In terms of assembly, homodimer.

It is found in the cytoplasm. The enzyme catalyses tRNA(Tyr) + L-tyrosine + ATP = L-tyrosyl-tRNA(Tyr) + AMP + diphosphate + H(+). In terms of biological role, catalyzes the attachment of tyrosine to tRNA(Tyr) in a two-step reaction: tyrosine is first activated by ATP to form Tyr-AMP and then transferred to the acceptor end of tRNA(Tyr). This is Tyrosine--tRNA ligase from Burkholderia pseudomallei (strain K96243).